The chain runs to 360 residues: Phenylalanine--tRNA ligase alpha subunit (360 aa).

Mg(2+) is bound at residue Glu260.

It belongs to the class-II aminoacyl-tRNA synthetase family. Phe-tRNA synthetase alpha subunit type 1 subfamily. Tetramer of two alpha and two beta subunits. It depends on Mg(2+) as a cofactor.

Its subcellular location is the cytoplasm. It carries out the reaction tRNA(Phe) + L-phenylalanine + ATP = L-phenylalanyl-tRNA(Phe) + AMP + diphosphate + H(+). The sequence is that of Phenylalanine--tRNA ligase alpha subunit from Bartonella tribocorum (strain CIP 105476 / IBS 506).